A 172-amino-acid polypeptide reads, in one-letter code: MORN repeat-containing protein 5 (172 aa).

MORN repeat units lie at residues 8–30 (YIGE…TETK), 31–53 (YIGE…NGSR), and 54–75 (FDAV…DGLQ).

The protein localises to the cell projection. It is found in the cilium. Its subcellular location is the flagellum. The protein is MORN repeat-containing protein 5 (MORN5) of Bos taurus (Bovine).